A 2974-amino-acid polypeptide reads, in one-letter code: Mediator of RNA polymerase II transcription subunit 13 (2974 aa).

Composition is skewed to basic and acidic residues over residues 284 to 299 (EKEP…KTPE), 340 to 367 (MFEP…AREV), 374 to 390 (RREE…RADD), and 624 to 633 (SREKRKEYQP). Disordered stretches follow at residues 284–309 (EKEP…PQTT), 340–394 (MFEP…NLED), 624–654 (SREK…KRKV), 677–749 (FNAW…FADI), 764–801 (LYNP…PKEE), 1032–1063 (PHGS…QDGE), 1099–1134 (GMLS…YPTP), 1140–1159 (LQAD…FRST), 1281–1342 (TLAR…TPTY), 1416–1486 (QGGL…DATA), 2052–2078 (ELKK…ATPA), and 2247–2309 (QDEA…PAGM). The stretch at 351-396 (KEETAAEKEKRMAAREVRRLRRQRREERRREMEKQRRADDNLEDYD) forms a coiled coil. Basic residues-rich tracts occupy residues 634–654 (YHRK…KRKV) and 677–688 (FNAWKQKKKGPP). Residues 689-717 (PKKDLAKKEAAADKDKDKDKEKDKEKDKD) are compositionally biased toward basic and acidic residues. Positions 1035–1048 (SFDHDSEPEFDEQR) are enriched in basic and acidic residues. 2 stretches are compositionally biased toward polar residues: residues 1122 to 1134 (IESQ…YPTP) and 1140 to 1149 (LQADASQAHS). Pro residues-rich tracts occupy residues 1284-1299 (RPPP…PTPM) and 1326-1340 (PAYP…PTTP). The span at 1443–1464 (IRNTDAPNDPTVSKLQSAVSRN) shows a compositional bias: polar residues. Residues 1473–1486 (AATSIPTATDDATA) are compositionally biased toward low complexity. Over residues 2064–2073 (STQSENSEGN) the composition is skewed to polar residues. A coiled-coil region spans residues 2220 to 2301 (AVEGRLKRQK…EQYPAEESQA (82 aa)). 2 stretches are compositionally biased toward basic and acidic residues: residues 2247–2258 (QDEADKREKMDE) and 2281–2292 (EEKKRNKQKENE). The tract at residues 2347–2974 (WKQRDTRVQN…LYHSVARLLV (628 aa)) is mediates transcriptional repression.

The protein belongs to the Mediator complex subunit 13 family. As to quaternary structure, component of the Mediator complex.

Its subcellular location is the nucleus. Component of the Mediator complex, a coactivator involved in regulated gene transcription of nearly all RNA polymerase II-dependent genes. Mediator functions as a bridge to convey information from gene-specific regulatory proteins to the basal RNA polymerase II transcription machinery. Mediator is recruited to promoters by direct interactions with regulatory proteins and serves as a scaffold for the assembly of a functional preinitiation complex with RNA polymerase II and the general transcription factors. This Caenorhabditis briggsae protein is Mediator of RNA polymerase II transcription subunit 13 (let-19).